The following is a 177-amino-acid chain: uncharacterized protein (177 aa).

4 consecutive transmembrane segments (helical) span residues 4-24 (IIIL…GFIL), 33-53 (ILSI…LHWI), 80-100 (IAFI…GSFL), and 115-135 (MLGA…LLYV).

It is found in the cell membrane. This is an uncharacterized protein from Bacillus subtilis (strain 168).